The chain runs to 265 residues: Phosphatidylserine decarboxylase proenzyme (265 aa).

S183 functions as the Schiff-base intermediate with substrate; via pyruvic acid in the catalytic mechanism. S183 carries the pyruvic acid (Ser); by autocatalysis modification. Residues 218–242 (PQIESEPESEPALQTAPVETAANPS) form a disordered region.

Belongs to the phosphatidylserine decarboxylase family. PSD-A subfamily. Heterodimer of a large membrane-associated beta subunit and a small pyruvoyl-containing alpha subunit. Pyruvate is required as a cofactor. Is synthesized initially as an inactive proenzyme. Formation of the active enzyme involves a self-maturation process in which the active site pyruvoyl group is generated from an internal serine residue via an autocatalytic post-translational modification. Two non-identical subunits are generated from the proenzyme in this reaction, and the pyruvate is formed at the N-terminus of the alpha chain, which is derived from the carboxyl end of the proenzyme. The post-translation cleavage follows an unusual pathway, termed non-hydrolytic serinolysis, in which the side chain hydroxyl group of the serine supplies its oxygen atom to form the C-terminus of the beta chain, while the remainder of the serine residue undergoes an oxidative deamination to produce ammonia and the pyruvoyl prosthetic group on the alpha chain.

The protein localises to the cell membrane. The catalysed reaction is a 1,2-diacyl-sn-glycero-3-phospho-L-serine + H(+) = a 1,2-diacyl-sn-glycero-3-phosphoethanolamine + CO2. It participates in phospholipid metabolism; phosphatidylethanolamine biosynthesis; phosphatidylethanolamine from CDP-diacylglycerol: step 2/2. Catalyzes the formation of phosphatidylethanolamine (PtdEtn) from phosphatidylserine (PtdSer). This chain is Phosphatidylserine decarboxylase proenzyme, found in Neisseria meningitidis serogroup C (strain 053442).